The chain runs to 771 residues: Ribonucleoside-diphosphate reductase large subunit (771 aa).

Residues 1 to 92 (MFVIKRNGYK…VSNLHKETKK (92 aa)) form the ATP-cone domain. ATP-binding positions include 5-6 (KR), 11-17 (ENVMFDK), Thr53, Asp57, and Lys88. The GDP site is built by Ser202 and Ser217. DTTP is bound by residues 226-228 (DSI), Lys243, and Arg256. Asn427 lines the GDP pocket. The Proton acceptor role is filled by Asn427. Cys429 serves as the catalytic Cysteine radical intermediate. Residues Glu431 and 603–606 (TAST) contribute to the GDP site. The Proton acceptor role is filled by Glu431.

It belongs to the ribonucleoside diphosphate reductase large chain family. Interacts with RNR2/OPG047 subunit. Mg(2+) serves as cofactor.

The enzyme catalyses a 2'-deoxyribonucleoside 5'-diphosphate + [thioredoxin]-disulfide + H2O = a ribonucleoside 5'-diphosphate + [thioredoxin]-dithiol. Its function is as follows. Ribonucleoside-diphosphate reductase holoenzyme provides the precursors necessary for viral DNA synthesis. Allows virus growth in non-dividing cells. Catalyzes the biosynthesis of deoxyribonucleotides from the corresponding ribonucleotides. The chain is Ribonucleoside-diphosphate reductase large subunit (OPG080) from Homo sapiens (Human).